Here is a 435-residue protein sequence, read N- to C-terminus: GTPase Der (435 aa).

EngA-type G domains lie at 8-169 (NLVA…NFEN) and 176-351 (FKIA…NNLS). GTP-binding positions include 14-21 (GKPNVGKS), 61-65 (DTGGI), 123-126 (NKLD), 182-189 (GKPNAGKS), 229-233 (DTAGI), and 294-297 (NKWD). The 84-residue stretch at 352 to 435 (REIKQNLLND…PINLVLKKNK (84 aa)) folds into the KH-like domain.

Belongs to the TRAFAC class TrmE-Era-EngA-EngB-Septin-like GTPase superfamily. EngA (Der) GTPase family. In terms of assembly, associates with the 50S ribosomal subunit.

GTPase that plays an essential role in the late steps of ribosome biogenesis. The sequence is that of GTPase Der from Mycoplasmopsis pulmonis (strain UAB CTIP) (Mycoplasma pulmonis).